Reading from the N-terminus, the 344-residue chain is Glycerol-3-phosphate dehydrogenase [NAD(P)+] (344 aa).

NADPH-binding residues include tryptophan 18, histidine 38, and lysine 115. 3 residues coordinate sn-glycerol 3-phosphate: lysine 115, glycine 144, and threonine 146. An NADPH-binding site is contributed by alanine 148. Sn-glycerol 3-phosphate-binding residues include lysine 199, aspartate 252, serine 262, arginine 263, and asparagine 264. Lysine 199 serves as the catalytic Proton acceptor. Residue arginine 263 participates in NADPH binding. Residues valine 288 and glutamate 290 each coordinate NADPH.

This sequence belongs to the NAD-dependent glycerol-3-phosphate dehydrogenase family.

Its subcellular location is the cytoplasm. The catalysed reaction is sn-glycerol 3-phosphate + NAD(+) = dihydroxyacetone phosphate + NADH + H(+). The enzyme catalyses sn-glycerol 3-phosphate + NADP(+) = dihydroxyacetone phosphate + NADPH + H(+). The protein operates within membrane lipid metabolism; glycerophospholipid metabolism. Its function is as follows. Catalyzes the reduction of the glycolytic intermediate dihydroxyacetone phosphate (DHAP) to sn-glycerol 3-phosphate (G3P), the key precursor for phospholipid synthesis. This is Glycerol-3-phosphate dehydrogenase [NAD(P)+] from Hydrogenovibrio crunogenus (strain DSM 25203 / XCL-2) (Thiomicrospira crunogena).